Consider the following 364-residue polypeptide: Dermonecrotic toxin SPH (364 aa).

The signal sequence occupies residues 1-17 (MIRIFALITALAITVKC). Histidine 29 functions as the Nucleophile in the catalytic mechanism. Mg(2+) contacts are provided by glutamate 49 and aspartate 51. Histidine 65 is an active-site residue. Disulfide bonds link cysteine 69-cysteine 75 and cysteine 71-cysteine 215. Aspartate 109 is a binding site for Mg(2+).

It belongs to the arthropod phospholipase D family. The cofactor is Mg(2+). In terms of tissue distribution, expressed in salivary glands.

Its subcellular location is the secreted. It catalyses the reaction an N-(acyl)-sphingosylphosphocholine = an N-(acyl)-sphingosyl-1,3-cyclic phosphate + choline. The enzyme catalyses an N-(acyl)-sphingosylphosphoethanolamine = an N-(acyl)-sphingosyl-1,3-cyclic phosphate + ethanolamine. The catalysed reaction is a 1-acyl-sn-glycero-3-phosphocholine = a 1-acyl-sn-glycero-2,3-cyclic phosphate + choline. It carries out the reaction a 1-acyl-sn-glycero-3-phosphoethanolamine = a 1-acyl-sn-glycero-2,3-cyclic phosphate + ethanolamine. Functionally, dermonecrotic toxins cleave the phosphodiester linkage between the phosphate and headgroup of certain phospholipids (sphingolipid and lysolipid substrates), forming an alcohol (often choline) and a cyclic phosphate. Acts on sphingomyelin (SM). It may also act on ceramide phosphoethanolamine (CPE), lysophosphatidylcholine (LPC) and lysophosphatidylethanolamine (LPE), but not on lysophosphatidylserine (LPS), and lysophosphatidylglycerol (LPG). It acts by transphosphatidylation, releasing exclusively cyclic phosphate products as second products. Induces dermonecrosis, hemolysis, increased vascular permeability, edema, inflammatory response, and platelet aggregation. This is Dermonecrotic toxin SPH (SPH) from Ixodes scapularis (Black-legged tick).